The primary structure comprises 201 residues: Dimethylsulfoniopropionate lyase DddQ (201 aa).

4 residues coordinate a divalent metal cation: H130, E134, Y136, and H169.

Belongs to the non-heme iron-dependent dioxygenase family. In terms of assembly, homodimer. A divalent metal cation serves as cofactor.

The enzyme catalyses S,S-dimethyl-beta-propiothetin = acrylate + dimethyl sulfide + H(+). In terms of biological role, may act as a dimethylsulfoniopropionate (DMSP) in vitro, releasing dimethyl sulfide (DMS). DMS is the principal form by which sulfur is transported from oceans to the atmosphere. The real activity of the protein is however subject to debate and it is unclear whether it constitutes a real dimethylsulfoniopropionate lyase in vivo. The polypeptide is Dimethylsulfoniopropionate lyase DddQ (Ruegeria pomeroyi (strain ATCC 700808 / DSM 15171 / DSS-3) (Silicibacter pomeroyi)).